The chain runs to 211 residues: MRLTAKQVTWLKVCLHLAGLLPFLWLVWAINHGGLGADPVKDIQHFTGRTALKFLLAALLITPLARYAKQPLLIRTRRLLGLWCFAWATLHLTSYALLELGVNNLALLGKELITRPYLTLGIISWVILLALAFTSTQSMQRKLGKHWQQLHNFVYLVAILAPIHYLWSVKIISPQPLIYAGLAVLLLALRYKKLLSLFNRLRKQAHNKLSL.

6 consecutive transmembrane segments (helical) span residues Trp10–Ile30, Phe54–Ile74, Leu82–Val102, Pro116–Thr136, Phe153–Ser173, and Ile178–Phe198.

Belongs to the MsrQ family. Heterodimer of a catalytic subunit (MsrP) and a heme-binding subunit (MsrQ). FMN is required as a cofactor. The cofactor is heme b.

It is found in the cell inner membrane. Part of the MsrPQ system that repairs oxidized periplasmic proteins containing methionine sulfoxide residues (Met-O), using respiratory chain electrons. Thus protects these proteins from oxidative-stress damage caused by reactive species of oxygen and chlorine generated by the host defense mechanisms. MsrPQ is essential for the maintenance of envelope integrity under bleach stress, rescuing a wide series of structurally unrelated periplasmic proteins from methionine oxidation, including the primary periplasmic chaperone SurA and the lipoprotein Pal. MsrQ provides electrons for reduction to the reductase catalytic subunit MsrP, using the quinone pool of the respiratory chain. The polypeptide is Protein-methionine-sulfoxide reductase heme-binding subunit MsrQ (Escherichia coli O6:H1 (strain CFT073 / ATCC 700928 / UPEC)).